The chain runs to 169 residues: Transcription antitermination protein NusB (169 aa).

The interval 1–23 (MADSKKPAIKKPVPKGDRKANRR) is disordered.

This sequence belongs to the NusB family.

Its function is as follows. Involved in transcription antitermination. Required for transcription of ribosomal RNA (rRNA) genes. Binds specifically to the boxA antiterminator sequence of the ribosomal RNA (rrn) operons. This Rhodopseudomonas palustris (strain HaA2) protein is Transcription antitermination protein NusB.